Consider the following 380-residue polypeptide: Flagellar P-ring protein (380 aa).

An N-terminal signal peptide occupies residues 1 to 35 (MRFFTQSPFPLRTLTRRLTAFVCVGLLLLPGFTLA).

Belongs to the FlgI family. In terms of assembly, the basal body constitutes a major portion of the flagellar organelle and consists of four rings (L,P,S, and M) mounted on a central rod.

The protein resides in the periplasm. It localises to the bacterial flagellum basal body. In terms of biological role, assembles around the rod to form the L-ring and probably protects the motor/basal body from shearing forces during rotation. The protein is Flagellar P-ring protein of Gluconobacter oxydans (strain 621H) (Gluconobacter suboxydans).